A 120-amino-acid polypeptide reads, in one-letter code: Immunoglobulin kappa variable 2-30 (120 aa).

The N-terminal stretch at M1–G20 is a signal peptide. The interval D21–C43 is framework-1. One can recognise an Ig-like domain in the interval D21 to P120. A disulfide bridge links C43 with C113. Residues R44–N59 are complementarity-determining-1. The segment at W60 to Y74 is framework-2. The segment at K75–S81 is complementarity-determining-2. The interval G82–C113 is framework-3. Positions M114 to P120 are complementarity-determining-3.

In terms of assembly, immunoglobulins are composed of two identical heavy chains and two identical light chains; disulfide-linked.

The protein resides in the secreted. It localises to the cell membrane. In terms of biological role, v region of the variable domain of immunoglobulin light chains that participates in the antigen recognition. Immunoglobulins, also known as antibodies, are membrane-bound or secreted glycoproteins produced by B lymphocytes. In the recognition phase of humoral immunity, the membrane-bound immunoglobulins serve as receptors which, upon binding of a specific antigen, trigger the clonal expansion and differentiation of B lymphocytes into immunoglobulins-secreting plasma cells. Secreted immunoglobulins mediate the effector phase of humoral immunity, which results in the elimination of bound antigens. The antigen binding site is formed by the variable domain of one heavy chain, together with that of its associated light chain. Thus, each immunoglobulin has two antigen binding sites with remarkable affinity for a particular antigen. The variable domains are assembled by a process called V-(D)-J rearrangement and can then be subjected to somatic hypermutations which, after exposure to antigen and selection, allow affinity maturation for a particular antigen. The chain is Immunoglobulin kappa variable 2-30 from Homo sapiens (Human).